The following is a 145-amino-acid chain: Transcriptional anti-antiactivator ExsC (145 aa).

As to quaternary structure, homodimer. Interacts with ExsE. Interacts directly with ExsD to form a heterotetrameric complex.

It is found in the cytoplasm. In the absence of inducing signals, ExsE interacts with and inhibits ExsC activity. Functionally, part of the regulatory cascade that plays a role in the transcriptional regulation of the type III secretion system (T3SS). Interacts with antiactivator ExsD to inhibit its activity leading to ExsA-mediated transcription. This Pseudomonas aeruginosa (strain ATCC 15692 / DSM 22644 / CIP 104116 / JCM 14847 / LMG 12228 / 1C / PRS 101 / PAO1) protein is Transcriptional anti-antiactivator ExsC (exsC).